A 487-amino-acid polypeptide reads, in one-letter code: Glutamyl-tRNA(Gln) amidotransferase subunit A (487 aa).

Catalysis depends on charge relay system residues lysine 75 and serine 150. Catalysis depends on serine 174, which acts as the Acyl-ester intermediate.

Belongs to the amidase family. GatA subfamily. In terms of assembly, heterotrimer of A, B and C subunits.

The catalysed reaction is L-glutamyl-tRNA(Gln) + L-glutamine + ATP + H2O = L-glutaminyl-tRNA(Gln) + L-glutamate + ADP + phosphate + H(+). Functionally, allows the formation of correctly charged Gln-tRNA(Gln) through the transamidation of misacylated Glu-tRNA(Gln) in organisms which lack glutaminyl-tRNA synthetase. The reaction takes place in the presence of glutamine and ATP through an activated gamma-phospho-Glu-tRNA(Gln). The polypeptide is Glutamyl-tRNA(Gln) amidotransferase subunit A (Deinococcus deserti (strain DSM 17065 / CIP 109153 / LMG 22923 / VCD115)).